The chain runs to 638 residues: Protein disulfide-isomerase A4 (638 aa).

A signal peptide spans 1 to 20 (MKLRKAWLLVLLLALTQLLA). 2 Thioredoxin domains span residues 21–162 (AASA…EVSQ) and 162–294 (QPDW…EFLK). The interval 24 to 50 (AGDAHEDTSDTENATEEEEEEDDDDLE) is disordered. Residues 32–50 (SDTENATEEEEEEDDDDLE) show a composition bias toward acidic residues. A glycan (N-linked (GlcNAc...) asparagine) is linked at Asn-36. Positions 84–87 (CGHC) match the CXXC motif. 2 disulfide bridges follow: Cys-84–Cys-87 and Cys-199–Cys-202. Lys-359 bears the N6-acetyllysine mark. One can recognise a Thioredoxin 3 domain in the interval 498–629 (FKKGKLKPVI…LSKFIDEHAT (132 aa)). A CXXC motif is present at residues 548 to 551 (CGHC). A disulfide bridge links Cys-548 with Cys-551. The short motif at 635-638 (KEEL) is the Prevents secretion from ER element.

It belongs to the protein disulfide isomerase family. In terms of assembly, part of a large chaperone multiprotein complex comprising DNAJB11, HSP90B1, HSPA5, HYOU, PDIA2, PDIA4, PDIA6, PPIB, SDF2L1, UGGT1 and very small amounts of ERP29, but not, or at very low levels, CALR nor CANX. Component of a complex containing at least CRELD2, MANF, MATN3 and PDIA4.

It localises to the endoplasmic reticulum lumen. The protein localises to the melanosome. The catalysed reaction is Catalyzes the rearrangement of -S-S- bonds in proteins.. In Mus musculus (Mouse), this protein is Protein disulfide-isomerase A4 (Pdia4).